The primary structure comprises 63 residues: MSRRCAITGKSAMNGHSVSHANNKTKKKFGVNLRTIRIKLEDGSTTKIKVAASTLRTMKKASK.

Positions 1–22 (MSRRCAITGKSAMNGHSVSHAN) are disordered.

Belongs to the bacterial ribosomal protein bL28 family.

This chain is Large ribosomal subunit protein bL28, found in Campylobacter hominis (strain ATCC BAA-381 / DSM 21671 / CCUG 45161 / LMG 19568 / NCTC 13146 / CH001A).